The following is a 252-amino-acid chain: Imidazole glycerol phosphate synthase subunit HisF (252 aa).

Catalysis depends on residues aspartate 11 and aspartate 130.

The protein belongs to the HisA/HisF family. Heterodimer of HisH and HisF.

It is found in the cytoplasm. It carries out the reaction 5-[(5-phospho-1-deoxy-D-ribulos-1-ylimino)methylamino]-1-(5-phospho-beta-D-ribosyl)imidazole-4-carboxamide + L-glutamine = D-erythro-1-(imidazol-4-yl)glycerol 3-phosphate + 5-amino-1-(5-phospho-beta-D-ribosyl)imidazole-4-carboxamide + L-glutamate + H(+). It functions in the pathway amino-acid biosynthesis; L-histidine biosynthesis; L-histidine from 5-phospho-alpha-D-ribose 1-diphosphate: step 5/9. Functionally, IGPS catalyzes the conversion of PRFAR and glutamine to IGP, AICAR and glutamate. The HisF subunit catalyzes the cyclization activity that produces IGP and AICAR from PRFAR using the ammonia provided by the HisH subunit. In Desulforudis audaxviator (strain MP104C), this protein is Imidazole glycerol phosphate synthase subunit HisF.